Here is a 330-residue protein sequence, read N- to C-terminus: GRB2-related adapter protein 2 (330 aa).

Residues 1 to 56 (MEAVAKFDFTASGEDELSFHTGDVLKILSNQEEWFKAELGSQEGYVPKNFIDIQFP) form the SH3 1 domain. Phosphotyrosine is present on tyrosine 45. The region spanning 58 to 149 (WFHEGLSRHQ…QKQIFLRDRT (92 aa)) is the SH2 domain. Lysine 106 carries the N6-acetyllysine modification. The segment at 143-244 (IFLRDRTRED…GSLDINDGHC (102 aa)) is disordered. The segment covering 144–164 (FLRDRTREDQGHRGNSLDRRS) has biased composition (basic and acidic residues). Serine 187 carries the post-translational modification Phosphoserine. A compositionally biased stretch (low complexity) spans 209–222 (PAPQQLQQPPQQRY). Phosphoserine is present on serine 236. Threonine 262 bears the Phosphothreonine mark. The SH3 2 domain occupies 271–330 (GRVRWARALYDFEALEDDELGFHSGEVVEVLDSSNPSWWTGRLHNKLGLFPANYVAPMTR).

It belongs to the GRB2/sem-5/DRK family. As to quaternary structure, interacts with phosphorylated LIME1 upon TCR activation. Interacts with phosphorylated LAT and LAX1 upon TCR activation. Interacts with SHB. Interacts with PTPN23.

It localises to the nucleus. Its subcellular location is the cytoplasm. The protein resides in the endosome. Interacts with SLP-76 to regulate NF-AT activation. Binds to tyrosine-phosphorylated shc. In Homo sapiens (Human), this protein is GRB2-related adapter protein 2 (GRAP2).